We begin with the raw amino-acid sequence, 164 residues long: Protein SprT (164 aa).

One can recognise a SprT-like domain in the interval 14–156 (QQAETFFKRT…LCRRCREPLV (143 aa)). H69 serves as a coordination point for Zn(2+). E70 is an active-site residue. H73 provides a ligand contact to Zn(2+).

This sequence belongs to the SprT family. Zn(2+) serves as cofactor.

The protein resides in the cytoplasm. This Pseudomonas savastanoi pv. phaseolicola (strain 1448A / Race 6) (Pseudomonas syringae pv. phaseolicola (strain 1448A / Race 6)) protein is Protein SprT.